Here is a 278-residue protein sequence, read N- to C-terminus: Elongation factor Ts (278 aa).

Residues 80–83 (TDFV) are involved in Mg(2+) ion dislocation from EF-Tu.

This sequence belongs to the EF-Ts family.

It is found in the cytoplasm. Its function is as follows. Associates with the EF-Tu.GDP complex and induces the exchange of GDP to GTP. It remains bound to the aminoacyl-tRNA.EF-Tu.GTP complex up to the GTP hydrolysis stage on the ribosome. The protein is Elongation factor Ts of Renibacterium salmoninarum (strain ATCC 33209 / DSM 20767 / JCM 11484 / NBRC 15589 / NCIMB 2235).